The following is a 435-amino-acid chain: Methylenetetrahydrofolate--tRNA-(uracil-5-)-methyltransferase TrmFO (435 aa).

9 to 14 (GAGLAG) contacts FAD.

The protein belongs to the MnmG family. TrmFO subfamily. It depends on FAD as a cofactor.

The protein resides in the cytoplasm. It catalyses the reaction uridine(54) in tRNA + (6R)-5,10-methylene-5,6,7,8-tetrahydrofolate + NADH + H(+) = 5-methyluridine(54) in tRNA + (6S)-5,6,7,8-tetrahydrofolate + NAD(+). The catalysed reaction is uridine(54) in tRNA + (6R)-5,10-methylene-5,6,7,8-tetrahydrofolate + NADPH + H(+) = 5-methyluridine(54) in tRNA + (6S)-5,6,7,8-tetrahydrofolate + NADP(+). Catalyzes the folate-dependent formation of 5-methyl-uridine at position 54 (M-5-U54) in all tRNAs. This Staphylococcus aureus (strain Newman) protein is Methylenetetrahydrofolate--tRNA-(uracil-5-)-methyltransferase TrmFO.